Reading from the N-terminus, the 139-residue chain is General odorant-binding protein 56a (139 aa).

An N-terminal signal peptide occupies residues 1–19 (MNSYFVIALSALFVTLAVG). N23 carries an N-linked (GlcNAc...) asparagine glycan. 3 disulfide bridges follow: C39–C71, C67–C118, and C109–C127.

It belongs to the PBP/GOBP family. In terms of tissue distribution, expressed in ventral pits of larvae. In adults, it is not specifically expressed in chemosensory organs. Also expressed in stalk cells at the proximal tip of the wing disk.

The protein localises to the secreted. Functionally, present in the aqueous fluid surrounding olfactory sensory dendrites and are thought to aid in the capture and transport of hydrophobic odorants into and through this fluid. This is General odorant-binding protein 56a (Obp56a) from Drosophila melanogaster (Fruit fly).